Reading from the N-terminus, the 91-residue chain is Small ribosomal subunit protein uS19 (91 aa).

Belongs to the universal ribosomal protein uS19 family.

In terms of biological role, protein S19 forms a complex with S13 that binds strongly to the 16S ribosomal RNA. This chain is Small ribosomal subunit protein uS19, found in Syntrophotalea carbinolica (strain DSM 2380 / NBRC 103641 / GraBd1) (Pelobacter carbinolicus).